The following is a 309-amino-acid chain: Carbamate kinase 2 (309 aa).

It belongs to the carbamate kinase family.

Its subcellular location is the cytoplasm. It carries out the reaction hydrogencarbonate + NH4(+) + ATP = carbamoyl phosphate + ADP + H2O + H(+). It participates in metabolic intermediate metabolism; carbamoyl phosphate degradation; CO(2) and NH(3) from carbamoyl phosphate: step 1/1. The sequence is that of Carbamate kinase 2 (arcC2) from Staphylococcus epidermidis (strain ATCC 12228 / FDA PCI 1200).